Reading from the N-terminus, the 452-residue chain is Chromosomal replication initiator protein DnaA (452 aa).

The segment at 1-72 (MPDMLTLWTD…LVEYAYQAAH (72 aa)) is domain I, interacts with DnaA modulators. Residues 72 to 114 (HEDIQPVLILENERQQQATLKAKTAPVAAGEPVEPTPTFMKET) are domain II. The interval 115–331 (ALNSRYTFDT…GALARVQAYS (217 aa)) is domain III, AAA+ region. G159, G161, K162, and T163 together coordinate ATP. Residues 332–452 (QLMHQPIATD…IDSLKDDLRR (121 aa)) are domain IV, binds dsDNA.

It belongs to the DnaA family. In terms of assembly, oligomerizes as a right-handed, spiral filament on DNA at oriC.

The protein localises to the cytoplasm. Its function is as follows. Plays an essential role in the initiation and regulation of chromosomal replication. ATP-DnaA binds to the origin of replication (oriC) to initiate formation of the DNA replication initiation complex once per cell cycle. Binds the DnaA box (a 9 base pair repeat at the origin) and separates the double-stranded (ds)DNA. Forms a right-handed helical filament on oriC DNA; dsDNA binds to the exterior of the filament while single-stranded (ss)DNA is stabiized in the filament's interior. The ATP-DnaA-oriC complex binds and stabilizes one strand of the AT-rich DNA unwinding element (DUE), permitting loading of DNA polymerase. After initiation quickly degrades to an ADP-DnaA complex that is not apt for DNA replication. Binds acidic phospholipids. The protein is Chromosomal replication initiator protein DnaA of Levilactobacillus brevis (strain ATCC 367 / BCRC 12310 / CIP 105137 / JCM 1170 / LMG 11437 / NCIMB 947 / NCTC 947) (Lactobacillus brevis).